A 161-amino-acid chain; its full sequence is Vasotocin-neurophysin VT (161 aa).

Residues 1–22 form the signal peptide; the sequence is MSAMGWTLLAAALLAISAQSNG. The cysteines at positions 23 and 28 are disulfide-linked. The residue at position 31 (Gly-31) is a Glycine amide. Intrachain disulfides connect Cys-43/Cys-91, Cys-46/Cys-58, Cys-52/Cys-81, Cys-59/Cys-71, Cys-99/Cys-111, Cys-105/Cys-123, and Cys-112/Cys-117.

It belongs to the vasopressin/oxytocin family.

It is found in the secreted. Functionally, vasotocin is an antidiuretic hormone. The polypeptide is Vasotocin-neurophysin VT (Eptatretus stoutii (Pacific hagfish)).